We begin with the raw amino-acid sequence, 756 residues long: MASNGAYPVLGPGVTVNPGTSLSVFTALPFATPAPGPAHRPPLVTAVVPPAGPLVLSAFPSTPLVAGQDGRGPSGAGASNVFVQMRTEVGPVKPPQAQTLILTQAPLVWQAPGTLCGGVMCPPPLLLAAAPGVPVTSAQVVGGTQACEGGWSHGLPLPPPPPAAQVAPIVSPGNARPWPQGAHGEGSLAPSQAKARPDDSCKPKSVYENFRLWQHYKPLARRHLPQSPDTEALSCFLIPVLRSLARRKPTMTLEEGLWQAMREWQHTSNFDRMIFYEMAEKFLEFEAEEEMQIQKSQWMKGPQSLPPPAPPRLEPRGPPAPEVVKQPVYLPSKDGPKAPTACLPPPRPQRPAETKAHLPPPRPQRPAETNAHLPPPRPQRPAETKVPEEIPPEVVQEYVDIMEELLGSHPGDTGEPEGQREKGKVEQPQEEDGITSDPGLLSYIDKLCSQEDFVTKVEAVIHPRFLEELLSPDPQMDFLALSQELEQEEGLTLAQLVEKRLLSLKEKGCGRAAPRHGTARLDSSPSEFAAGQEAAREVPDPQQRVSVETSPPQTAAQDPQGQGRVRTGMARSEDPAVLLGCQDSPRLKAVRPTSPPQDHRPTCPGLGTKDALGLPGESPVKESHGLAKGSSEETELPGMVYVVGSHHRLRPWRLSQSPVPSSGLLSPGGRGPQGALQSPSAQKRGLSPSPSPASKSKKRPLFGSPSPAEKTPHPGPGLRVSGEQSLAWGLGGPSQSQKRKGDPLASRRKKKRHCSQ.

4 disordered regions span residues 173 to 200 (GNARPWPQGAHGEGSLAPSQAKARPDDS), 293 to 438 (IQKS…TSDP), 511 to 639 (RAAP…LPGM), and 653 to 756 (RLSQ…HCSQ). Over residues 304-321 (SLPPPAPPRLEPRGPPAP) the composition is skewed to pro residues. The segment covering 417–427 (EGQREKGKVEQ) has biased composition (basic and acidic residues). Over residues 543 to 560 (QRVSVETSPPQTAAQDPQ) the composition is skewed to polar residues. The segment covering 654 to 665 (LSQSPVPSSGLL) has biased composition (low complexity). Over residues 746 to 756 (SRRKKKRHCSQ) the composition is skewed to basic residues.

It belongs to the NUT family.

This chain is NUT family member 2F (NUTM2F), found in Homo sapiens (Human).